A 291-amino-acid chain; its full sequence is MRTISTIADLREALAEHRRAGRSIGLVPTMGYLHVGHMELVRRAGSENDVVVASIFVNPLQFGANEDLGKYPRDLARDQALLTDGGVDFLFAPGVSDMYPRPMETVVDVPKLGSELEGAVRPGHFAGVATVVTKLFNIVQPDRAYFGEKDFQQLQIIRRMVEDLAQPVTVIGVPTVREEDGLACSSRNVYLTTQERRAAAIVPKALDEAERLIASGVTEPAEVEKRVLEFLAGEPLARPEVVALRDPETLGPVSEIEEKPVLLLLFVRFGTTKLLDNRVIAPKSARFAKVA.

An ATP-binding site is contributed by 30–37 (MGYLHVGH). H37 acts as the Proton donor in catalysis. Q61 contributes to the (R)-pantoate binding site. Q61 is a beta-alanine binding site. Position 147-150 (147-150 (GEKD)) interacts with ATP. Residue Q153 participates in (R)-pantoate binding. ATP contacts are provided by residues V176 and 184–187 (CSSR).

The protein belongs to the pantothenate synthetase family. As to quaternary structure, homodimer.

It is found in the cytoplasm. The enzyme catalyses (R)-pantoate + beta-alanine + ATP = (R)-pantothenate + AMP + diphosphate + H(+). Its pathway is cofactor biosynthesis; (R)-pantothenate biosynthesis; (R)-pantothenate from (R)-pantoate and beta-alanine: step 1/1. In terms of biological role, catalyzes the condensation of pantoate with beta-alanine in an ATP-dependent reaction via a pantoyl-adenylate intermediate. This chain is Pantothenate synthetase, found in Rhizobium meliloti (strain 1021) (Ensifer meliloti).